Here is a 64-residue protein sequence, read N- to C-terminus: Small ribosomal subunit protein bS21 (64 aa).

The protein belongs to the bacterial ribosomal protein bS21 family.

This is Small ribosomal subunit protein bS21 from Amoebophilus asiaticus (strain 5a2).